The primary structure comprises 172 residues: Shikimate kinase (172 aa).

17–22 lines the ATP pocket; sequence GTGKST. S21 contributes to the Mg(2+) binding site. Substrate contacts are provided by D39, R63, and G84. Position 122 (R122) interacts with ATP. R140 is a binding site for substrate.

The protein belongs to the shikimate kinase family. Monomer. The cofactor is Mg(2+).

The protein localises to the cytoplasm. The catalysed reaction is shikimate + ATP = 3-phosphoshikimate + ADP + H(+). Its pathway is metabolic intermediate biosynthesis; chorismate biosynthesis; chorismate from D-erythrose 4-phosphate and phosphoenolpyruvate: step 5/7. Functionally, catalyzes the specific phosphorylation of the 3-hydroxyl group of shikimic acid using ATP as a cosubstrate. This chain is Shikimate kinase, found in Staphylococcus haemolyticus (strain JCSC1435).